The following is a 626-amino-acid chain: Janus kinase and microtubule-interacting protein 1 (626 aa).

Positions 1–22 (MSKKGRSKGEKPEMETDAVQMA) are disordered. Residues 1–365 (MSKKGRSKGE…KIKNLTRENV (365 aa)) are mediates association with microtubules. Coiled-coil stretches lie at residues 19-255 (VQMA…EAER) and 284-413 (ERDV…DDLS). The interval 365–626 (VEMKEKLSAQ…ILFEPKLKFM (262 aa)) is mediates interaction with TYK2 and GABBR1. Ser382 carries the post-translational modification Phosphoserine. Residues 452–461 (ETLSETSYNT) show a composition bias toward polar residues. Residues 452 to 477 (ETLSETSYNTDRTDRTPATPEEDLDD) are disordered. A Phosphothreonine modification is found at Thr470. Positions 490–604 (QLTREYQALQ…EFRVLELEVR (115 aa)) form a coiled coil.

It belongs to the JAKMIP family. As to quaternary structure, homodimer. Forms a complex with GABBR1 and KIF5B/kinesin-1. Interacts with JAK1 and TYK2. In terms of tissue distribution, predominantly expressed in neural tissues and lymphoid cells (at protein level). Isoform 2, isoform 3 and isoform 4 are specifically expressed in brain and retina. Isoform 1 and isoform 5 are also detected in liver, lung and skeletal muscle. Also detected in testis and to a lower extent spleen and intestine.

The protein localises to the cytoplasm. Its subcellular location is the cytoskeleton. It localises to the membrane. Associates with microtubules and may play a role in the microtubule-dependent transport of the GABA-B receptor. May play a role in JAK1 signaling and regulate microtubule cytoskeleton rearrangements. The protein is Janus kinase and microtubule-interacting protein 1 (JAKMIP1) of Homo sapiens (Human).